The following is a 735-amino-acid chain: Putative RNA polymerase II subunit B1 CTD phosphatase RPAP2 homolog (735 aa).

The RTR1-type zinc-finger motif lies at 33–118 (AARKLMSRSD…LQEARTLEFD (86 aa)). Zn(2+) is bound by residues cysteine 56, cysteine 61, cysteine 94, and cysteine 98. Disordered regions lie at residues 179–201 (VPFDRSKSSNDSKATTQSNQEKH), 349–374 (GKNTLSGSSSGSNTKGSKTKPEKSRK), and 519–538 (EHSEEEMTEEEPTLLKWPNK). The segment covering 349–364 (GKNTLSGSSSGSNTKG) has biased composition (low complexity). Acidic residues predominate over residues 519 to 530 (EHSEEEMTEEEP).

It belongs to the RPAP2 family.

The protein localises to the nucleus. It carries out the reaction O-phospho-L-seryl-[protein] + H2O = L-seryl-[protein] + phosphate. The enzyme catalyses O-phospho-L-threonyl-[protein] + H2O = L-threonyl-[protein] + phosphate. Putative RNA polymerase II subunit B1 C-terminal domain (CTD) phosphatase involved in RNA polymerase II transcription regulation. This is Putative RNA polymerase II subunit B1 CTD phosphatase RPAP2 homolog from Arabidopsis thaliana (Mouse-ear cress).